Consider the following 391-residue polypeptide: Elongation factor Tu (391 aa).

One can recognise a tr-type G domain in the interval 10 to 201; it reads KPHVNIGTIG…AVDDYIPTPA (192 aa). Residues 19–26 are G1; that stretch reads GHVDHGKT. 19 to 26 serves as a coordination point for GTP; sequence GHVDHGKT. Thr-26 provides a ligand contact to Mg(2+). The tract at residues 55 to 59 is G2; sequence GITIS. The tract at residues 76–79 is G3; it reads DCPG. Residues 76 to 80 and 131 to 134 contribute to the GTP site; these read DCPGH and NKVD. Residues 131–134 are G4; it reads NKVD. The segment at 169 to 171 is G5; that stretch reads SAL.

Belongs to the TRAFAC class translation factor GTPase superfamily. Classic translation factor GTPase family. EF-Tu/EF-1A subfamily. In terms of assembly, monomer.

It localises to the cytoplasm. The catalysed reaction is GTP + H2O = GDP + phosphate + H(+). In terms of biological role, GTP hydrolase that promotes the GTP-dependent binding of aminoacyl-tRNA to the A-site of ribosomes during protein biosynthesis. This Dinoroseobacter shibae (strain DSM 16493 / NCIMB 14021 / DFL 12) protein is Elongation factor Tu.